We begin with the raw amino-acid sequence, 202 residues long: Crossover junction endodeoxyribonuclease RuvC (202 aa).

Catalysis depends on residues aspartate 7, glutamate 68, and aspartate 141. 3 residues coordinate Mg(2+): aspartate 7, glutamate 68, and aspartate 141.

This sequence belongs to the RuvC family. Homodimer which binds Holliday junction (HJ) DNA. The HJ becomes 2-fold symmetrical on binding to RuvC with unstacked arms; it has a different conformation from HJ DNA in complex with RuvA. In the full resolvosome a probable DNA-RuvA(4)-RuvB(12)-RuvC(2) complex forms which resolves the HJ. Mg(2+) is required as a cofactor.

It localises to the cytoplasm. It catalyses the reaction Endonucleolytic cleavage at a junction such as a reciprocal single-stranded crossover between two homologous DNA duplexes (Holliday junction).. The RuvA-RuvB-RuvC complex processes Holliday junction (HJ) DNA during genetic recombination and DNA repair. Endonuclease that resolves HJ intermediates. Cleaves cruciform DNA by making single-stranded nicks across the HJ at symmetrical positions within the homologous arms, yielding a 5'-phosphate and a 3'-hydroxyl group; requires a central core of homology in the junction. The consensus cleavage sequence is 5'-(A/T)TT(C/G)-3'. Cleavage occurs on the 3'-side of the TT dinucleotide at the point of strand exchange. HJ branch migration catalyzed by RuvA-RuvB allows RuvC to scan DNA until it finds its consensus sequence, where it cleaves and resolves the cruciform DNA. This is Crossover junction endodeoxyribonuclease RuvC from Clavibacter michiganensis subsp. michiganensis (strain NCPPB 382).